The chain runs to 1741 residues: DNA-directed RNA polymerase III subunit RPC1 (1741 aa).

Positions 79, 82, 89, 92, 119, 122, and 160 each coordinate Zn(2+). Asp-722, Asp-724, and Asp-726 together coordinate Mg(2+). The segment at 1099–1111 (PFEFLAHARAGRD) is bridging helix. The disordered stretch occupies residues 1719–1741 (RHANKRSWSRGKERHASLKPKNR).

This sequence belongs to the RNA polymerase beta' chain family. As to quaternary structure, component of the RNA polymerase III (Pol III) complex consisting of 17 subunits.

The protein resides in the nucleus. It carries out the reaction RNA(n) + a ribonucleoside 5'-triphosphate = RNA(n+1) + diphosphate. Functionally, DNA-dependent RNA polymerase catalyzes the transcription of DNA into RNA using the four ribonucleoside triphosphates as substrates. Largest and catalytic core component of RNA polymerase III which synthesizes small RNAs, such as 5S rRNA and tRNAs. Forms the polymerase active center together with the second largest subunit. A single-stranded DNA template strand of the promoter is positioned within the central active site cleft of Pol III. A bridging helix emanates from RPC1 and crosses the cleft near the catalytic site and is thought to promote translocation of Pol III by acting as a ratchet that moves the RNA-DNA hybrid through the active site by switching from straight to bent conformations at each step of nucleotide addition. This is DNA-directed RNA polymerase III subunit RPC1 (RPOA3) from Giardia intestinalis (Giardia lamblia).